The chain runs to 561 residues: Dihydroxy-acid dehydratase (561 aa).

Cys-50 lines the [2Fe-2S] cluster pocket. Position 82 (Asp-82) interacts with Mg(2+). Cys-123 lines the [2Fe-2S] cluster pocket. Mg(2+) contacts are provided by Asp-124 and Lys-125. The residue at position 125 (Lys-125) is an N6-carboxylysine. Cys-195 provides a ligand contact to [2Fe-2S] cluster. Glu-447 serves as a coordination point for Mg(2+). Catalysis depends on Ser-473, which acts as the Proton acceptor.

It belongs to the IlvD/Edd family. Homodimer. The cofactor is [2Fe-2S] cluster. Mg(2+) serves as cofactor.

It carries out the reaction (2R)-2,3-dihydroxy-3-methylbutanoate = 3-methyl-2-oxobutanoate + H2O. It catalyses the reaction (2R,3R)-2,3-dihydroxy-3-methylpentanoate = (S)-3-methyl-2-oxopentanoate + H2O. The protein operates within amino-acid biosynthesis; L-isoleucine biosynthesis; L-isoleucine from 2-oxobutanoate: step 3/4. Its pathway is amino-acid biosynthesis; L-valine biosynthesis; L-valine from pyruvate: step 3/4. Functionally, functions in the biosynthesis of branched-chain amino acids. Catalyzes the dehydration of (2R,3R)-2,3-dihydroxy-3-methylpentanoate (2,3-dihydroxy-3-methylvalerate) into 2-oxo-3-methylpentanoate (2-oxo-3-methylvalerate) and of (2R)-2,3-dihydroxy-3-methylbutanoate (2,3-dihydroxyisovalerate) into 2-oxo-3-methylbutanoate (2-oxoisovalerate), the penultimate precursor to L-isoleucine and L-valine, respectively. The sequence is that of Dihydroxy-acid dehydratase from Microcystis aeruginosa (strain NIES-843 / IAM M-2473).